A 363-amino-acid chain; its full sequence is 2,5-diketocamphane 1,2-monooxygenase 1 (363 aa).

Residues Met-74 and 186–194 each bind FMN; that span reads TGLTKNSSS.

Belongs to the bacterial luciferase oxidoreductase family. Homodimer. Likely forms a loose transient complex with a P.putida flavin reductase that provides the required FMNH(2) to the enzyme.

The enzyme catalyses (1R,4R)-bornane-2,5-dione + FMNH2 + O2 = (1R,4R)-5-oxo-1,2-campholide + FMN + H2O + H(+). It participates in terpene metabolism; (R)-camphor degradation. In terms of biological role, involved in the degradation and assimilation of (+)-camphor, which allows P.putida strain NCIMB 10007 to grow on this enantiomer of camphor as the sole carbon source. Catalyzes the FMNH(2)-dependent lactonization of 2,5-diketocamphane via a Baeyer-Villiger oxidation to produce the unstable lactone 5-oxo-1,2-campholide with (R,R) configuration, that presumably undergoes spontaneous hydrolysis to form 2-oxo-Delta(3)-4,5,5-trimethylcyclopentenylacetate. Is also able to convert (+)-camphor and norcamphor to the corresponding lactone in vitro. Shows no conversion of (-)-camphor, (+)-fenchone, (-)-fenchone, and (+)-nopinone. Acts only on bicyclic ketones; is not active towards monocyclic ketones, aromatic ketones, the aliphatic 2-decanone, 1-indanone and progesterone. The chain is 2,5-diketocamphane 1,2-monooxygenase 1 from Pseudomonas putida (Arthrobacter siderocapsulatus).